The chain runs to 216 residues: Orotate phosphoribosyltransferase (216 aa).

A 5-phospho-alpha-D-ribose 1-diphosphate-binding site is contributed by K30. Residue 38–39 participates in orotate binding; that stretch reads FF. Residues 75-76, R102, K103, K106, H108, and 128-136 contribute to the 5-phospho-alpha-D-ribose 1-diphosphate site; these read YK and DDVITAGTA. T132 and R160 together coordinate orotate.

This sequence belongs to the purine/pyrimidine phosphoribosyltransferase family. PyrE subfamily. As to quaternary structure, homodimer. Requires Mg(2+) as cofactor.

It carries out the reaction orotidine 5'-phosphate + diphosphate = orotate + 5-phospho-alpha-D-ribose 1-diphosphate. It functions in the pathway pyrimidine metabolism; UMP biosynthesis via de novo pathway; UMP from orotate: step 1/2. Catalyzes the transfer of a ribosyl phosphate group from 5-phosphoribose 1-diphosphate to orotate, leading to the formation of orotidine monophosphate (OMP). This is Orotate phosphoribosyltransferase from Acinetobacter baylyi (strain ATCC 33305 / BD413 / ADP1).